The following is a 126-amino-acid chain: Aspartate 1-decarboxylase (126 aa).

Ser-25 acts as the Schiff-base intermediate with substrate; via pyruvic acid in catalysis. Ser-25 is modified (pyruvic acid (Ser)). Thr-57 contributes to the substrate binding site. The active-site Proton donor is Tyr-58. Residue 73-75 coordinates substrate; it reads GGA.

Belongs to the PanD family. In terms of assembly, heterooctamer of four alpha and four beta subunits. It depends on pyruvate as a cofactor. Post-translationally, is synthesized initially as an inactive proenzyme, which is activated by self-cleavage at a specific serine bond to produce a beta-subunit with a hydroxyl group at its C-terminus and an alpha-subunit with a pyruvoyl group at its N-terminus.

It localises to the cytoplasm. The catalysed reaction is L-aspartate + H(+) = beta-alanine + CO2. It functions in the pathway cofactor biosynthesis; (R)-pantothenate biosynthesis; beta-alanine from L-aspartate: step 1/1. Catalyzes the pyruvoyl-dependent decarboxylation of aspartate to produce beta-alanine. This chain is Aspartate 1-decarboxylase, found in Xanthomonas axonopodis pv. citri (strain 306).